The primary structure comprises 644 residues: 1-deoxy-D-xylulose-5-phosphate synthase (644 aa).

Thiamine diphosphate contacts are provided by residues histidine 84 and glycine 125–serine 127. Position 156 (aspartate 156) interacts with Mg(2+). Thiamine diphosphate contacts are provided by residues glycine 157–alanine 158, asparagine 185, tyrosine 296, and glutamate 378. Asparagine 185 lines the Mg(2+) pocket.

The protein belongs to the transketolase family. DXPS subfamily. Homodimer. The cofactor is Mg(2+). Thiamine diphosphate serves as cofactor.

The enzyme catalyses D-glyceraldehyde 3-phosphate + pyruvate + H(+) = 1-deoxy-D-xylulose 5-phosphate + CO2. The protein operates within metabolic intermediate biosynthesis; 1-deoxy-D-xylulose 5-phosphate biosynthesis; 1-deoxy-D-xylulose 5-phosphate from D-glyceraldehyde 3-phosphate and pyruvate: step 1/1. In terms of biological role, catalyzes the acyloin condensation reaction between C atoms 2 and 3 of pyruvate and glyceraldehyde 3-phosphate to yield 1-deoxy-D-xylulose-5-phosphate (DXP). The protein is 1-deoxy-D-xylulose-5-phosphate synthase of Paramagnetospirillum magneticum (strain ATCC 700264 / AMB-1) (Magnetospirillum magneticum).